Reading from the N-terminus, the 777-residue chain is MSGRSGNGGQQKMRIRPFMATIDEQYVTQTWELLKRAIQEIQRKNNSGLSFEELYRNAYTMVLHKHGERLYNGLKDVIQDHMASVRIRIIESMNSGSFLETVAESWADHTVAMVMIRDILMYMDRIYVAQNNHVLPVYNLGLDAYRTEILRQNGIGDRIRDALLELIKLDRKSNQINWHGIKNACDMLISLGIDSRTVYEDEFERPLLKETSDYYRDVCKNWLSGDNDACFYLAQVEIAMHDEASRASRYLDKMTEAKILQVMDDVMVAEHIQTIVYMQNGGVKFMLEHKKIEDLTRIFRIFKRIGDSVTVPGGGLKALLKAVSEYLNETGSNIVKNEDLLKNPVNFVNELLQLKDYFSSLLTTAFADDRDFKNRFQHDFETFLNSNRQSPEFVALYMDDMLRSGLKCVSDAEMDNKLDNVMILFRYLQEKDVFEKYFKQYLAKRLLLDKSCSDDVEKALLAKLKTECGCQFTQKLENMFRDKELWLTLATSFRDWREAQPTKMSIDISLRVLTAGVWPTVQCNPVVLPQELSVAYEMFTQYYTEKHTGRKLTINTLLGNADVKATFYPPPKASMSNEENGPGPSSSGESMKERKPEHKILQVNTHQMIILLQFNHHNRISCQQLMDELKIPERELKRNLQSLALGKASQRILVRKNKGKDAIDMSDEFAVNDNFQSKLTRVKVQMVTGKVESEPEIRETRQKVEDDRKLEVEAAIVRIMKARKKLNHNNLVAEVTQQLRHRFMPSPIIIKQRIETLIEREYLARDEHDHRAYQYIA.

The interval tyrosine 568 to proline 596 is disordered. Low complexity predominate over residues serine 576–glutamate 589. Residues aspartate 707–aspartate 769 form the Cullin neddylation domain. Lysine 721 is covalently cross-linked (Glycyl lysine isopeptide (Lys-Gly) (interchain with G-Cter in NEDD8)).

Belongs to the cullin family. In terms of assembly, probable component of multiple cullin-RING-based BCB (BTB-CUL3-BTB) E3 ubiquitin-protein ligase complexes formed by cul-3, rbx-1 and a variable BTB domain-containing protein acting as both, adapter to cullin and substrate recognition component. Interacts with bath-15, bath-40, bath-41, bath-42, C17F4.8, tag-303, D2045.8, F57C2.1, ZC239.15 and B0281.5. Interacts with mel-26 (via BTB domain). Interacts with dcn-1. Post-translationally, neddylated. Deneddylated via its interaction with the COP9 signalosome (CSN) complex.

Its subcellular location is the cytoplasm. It localises to the nucleus. Its pathway is protein modification; protein ubiquitination. Probable core component of multiple cullin-RING-based BCB (BTB-CUL3-BTB) E3 ubiquitin-protein ligase complexes which mediate the ubiquitination and subsequent proteasomal degradation of target proteins. Probably acts as a scaffold protein which may contribute to catalysis through positioning of the substrate and the ubiquitin-conjugating enzyme. Required to target mei-3/katanin for degradation at the meiosis to mitosis transition via its neddylation and deneddylation. Functions in ubiquitin-mediated degradation of CKIs to target cki-1 for degradation. Regulates microtubule stability in the early embryo. In body wall muscles, involved in the organization of myosin thick filaments, likely by regulating the degradation of microtubule severing protein mei-1 downstream of unc-89. Together with spop-1, may promote the ubiquitination and proteasomal degradation of target bromodomain-containing proteins such as bet-1. The sequence is that of Cullin-3 from Caenorhabditis elegans.